The sequence spans 307 residues: Urease accessory protein UreD (307 aa).

This sequence belongs to the UreD family. UreD, UreF and UreG form a complex that acts as a GTP-hydrolysis-dependent molecular chaperone, activating the urease apoprotein by helping to assemble the nickel containing metallocenter of UreC. The UreE protein probably delivers the nickel.

It localises to the cytoplasm. Its function is as follows. Required for maturation of urease via the functional incorporation of the urease nickel metallocenter. The protein is Urease accessory protein UreD of Prochlorococcus marinus (strain NATL2A).